The chain runs to 396 residues: Enoyl-[acyl-carrier-protein] reductase [NADH] (396 aa).

NAD(+)-binding positions include 48–53, 74–75, 111–112, and 139–140; these read GASTGY, FE, DA, and LA. Position 225 (Tyr225) interacts with substrate. The active-site Proton donor is the Tyr235. NAD(+) contacts are provided by residues Lys244 and 273 to 275; that span reads VVT.

It belongs to the TER reductase family. Monomer.

It carries out the reaction a 2,3-saturated acyl-[ACP] + NAD(+) = a (2E)-enoyl-[ACP] + NADH + H(+). The protein operates within lipid metabolism; fatty acid biosynthesis. In terms of biological role, involved in the final reduction of the elongation cycle of fatty acid synthesis (FAS II). Catalyzes the reduction of a carbon-carbon double bond in an enoyl moiety that is covalently linked to an acyl carrier protein (ACP). The polypeptide is Enoyl-[acyl-carrier-protein] reductase [NADH] (Colwellia psychrerythraea (strain 34H / ATCC BAA-681) (Vibrio psychroerythus)).